The sequence spans 368 residues: L-arabinitol 4-dehydrogenase (368 aa).

Zn(2+) is bound by residues cysteine 52, histidine 77, glutamate 78, cysteine 107, cysteine 110, cysteine 113, cysteine 121, and glutamate 162. Positions 210, 215, and 282 each coordinate NAD(+).

This sequence belongs to the zinc-containing alcohol dehydrogenase family. Homotetramer. It depends on Zn(2+) as a cofactor.

The enzyme catalyses L-arabinitol + NAD(+) = L-xylulose + NADH + H(+). Plays a key role in liamocins biosynthesis by providing the arabinol moity that is linked to 3,5-dihydroxydecanoic acid (provided by the HR-PKS PKS1) via ester bond formation catalyzed by the esterase EST1. This chain is L-arabinitol 4-dehydrogenase, found in Aureobasidium melanogenum (Aureobasidium pullulans var. melanogenum).